We begin with the raw amino-acid sequence, 139 residues long: Probable disulfide formation protein C 1 (139 aa).

A helical membrane pass occupies residues 8–27; sequence EYALFTAWGASFIATLGSLY. Cysteines 37 and 40 form a disulfide. 2 helical membrane passes run 42–61 and 68–85; these read YQRI…VVKK and YSLP…YHYV. An intrachain disulfide couples cysteine 99 to cysteine 104. Residues 113 to 135 traverse the membrane as a helical segment; sequence GFVTIPFLALIGFITIAVCSFIV.

It belongs to the DsbB family. BdbC subfamily.

The protein localises to the cell membrane. In terms of biological role, required for disulfide bond formation in some proteins. The protein is Probable disulfide formation protein C 1 (bdbC1) of Bacillus anthracis.